The chain runs to 875 residues: Phosphoenolpyruvate carboxylase (875 aa).

Active-site residues include H137 and K542.

It belongs to the PEPCase type 1 family. Mg(2+) serves as cofactor.

The catalysed reaction is oxaloacetate + phosphate = phosphoenolpyruvate + hydrogencarbonate. In terms of biological role, forms oxaloacetate, a four-carbon dicarboxylic acid source for the tricarboxylic acid cycle. The protein is Phosphoenolpyruvate carboxylase of Pseudomonas entomophila (strain L48).